The following is a 178-amino-acid chain: uncharacterized protein (178 aa).

Disordered stretches follow at residues 89-115 (NEEQ…RLSI) and 136-178 (DMPT…EIKA). Over residues 98-109 (ASHGSTSSATST) the composition is skewed to low complexity. The segment covering 167–178 (DSDEEEEEEIKA) has biased composition (acidic residues).

It localises to the cytoplasm. It is found in the nucleus. This is an uncharacterized protein from Schizosaccharomyces pombe (strain 972 / ATCC 24843) (Fission yeast).